We begin with the raw amino-acid sequence, 375 residues long: ATP phosphoribosyltransferase regulatory subunit (375 aa).

It belongs to the class-II aminoacyl-tRNA synthetase family. HisZ subfamily. In terms of assembly, heteromultimer composed of HisG and HisZ subunits.

The protein resides in the cytoplasm. Its pathway is amino-acid biosynthesis; L-histidine biosynthesis; L-histidine from 5-phospho-alpha-D-ribose 1-diphosphate: step 1/9. Its function is as follows. Required for the first step of histidine biosynthesis. May allow the feedback regulation of ATP phosphoribosyltransferase activity by histidine. This Agrobacterium fabrum (strain C58 / ATCC 33970) (Agrobacterium tumefaciens (strain C58)) protein is ATP phosphoribosyltransferase regulatory subunit.